Consider the following 286-residue polypeptide: Protein N-terminal amidase (286 aa).

A CN hydrolase domain is found at 1–286; the sequence is MKFGCVQFFP…NGIVVGELEK (286 aa). Glu-43 serves as the catalytic Proton acceptor. Lys-121 (proton donor) is an active-site residue. The Nucleophile role is filled by Cys-155.

It belongs to the carbon-nitrogen hydrolase superfamily.

The protein localises to the cytoplasm. It is found in the nucleus. Deamidates N-terminal Asn and Gln. Component of a targeting complex in the N-end rule pathway. The sequence is that of Protein N-terminal amidase (nta1) from Schizosaccharomyces pombe (strain 972 / ATCC 24843) (Fission yeast).